A 347-amino-acid chain; its full sequence is Merozoite surface protein P12 (347 aa).

The or 25 signal peptide spans 1–23 (MIKLSKKYCLGISFVLYILLSVC). 6-Cys domains lie at 27-172 (KNLT…IPSL) and 175-305 (KVKG…ISSS). An N-linked (GlcNAc...) asparagine glycan is attached at N28. Cystine bridges form between C31–C53, C67–C138, and C81–C136. N147, N200, N228, N242, N265, and N322 each carry an N-linked (GlcNAc...) asparagine glycan. Intrachain disulfides connect C179–C211, C225–C286, and C236–C284. N322 carries GPI-anchor amidated asparagine lipidation. Positions 323–347 (SSFLTLSSYCAFITFIITSFLSFIL) are cleaved as a propeptide — removed in mature form.

Heterodimer; heterodimerizes with PF41. May form an antiparallel heterodimer with PF41.

It localises to the cell surface. It is found in the cell membrane. The polypeptide is Merozoite surface protein P12 (PF12) (Plasmodium falciparum).